A 267-amino-acid polypeptide reads, in one-letter code: 3-methyl-2-oxobutanoate hydroxymethyltransferase (267 aa).

The Mg(2+) site is built by D46 and D85. 3-methyl-2-oxobutanoate contacts are provided by residues 46 to 47 (DS), D85, and K115. Position 117 (E117) interacts with Mg(2+). E184 (proton acceptor) is an active-site residue.

This sequence belongs to the PanB family. As to quaternary structure, homodecamer; pentamer of dimers. The cofactor is Mg(2+).

It is found in the cytoplasm. The catalysed reaction is 3-methyl-2-oxobutanoate + (6R)-5,10-methylene-5,6,7,8-tetrahydrofolate + H2O = 2-dehydropantoate + (6S)-5,6,7,8-tetrahydrofolate. Its pathway is cofactor biosynthesis; (R)-pantothenate biosynthesis; (R)-pantoate from 3-methyl-2-oxobutanoate: step 1/2. Its function is as follows. Catalyzes the reversible reaction in which hydroxymethyl group from 5,10-methylenetetrahydrofolate is transferred onto alpha-ketoisovalerate to form ketopantoate. The chain is 3-methyl-2-oxobutanoate hydroxymethyltransferase from Syntrophotalea carbinolica (strain DSM 2380 / NBRC 103641 / GraBd1) (Pelobacter carbinolicus).